A 1160-amino-acid polypeptide reads, in one-letter code: Nck-associated protein 1 homolog (1160 aa).

It belongs to the HEM-1/HEM-2 family. As to quaternary structure, part of a Scar/WAVE complex containing brk1, scrA, abiA, pirA and napA.

In terms of biological role, involved in regulation of actin and microtubule organization. Involved in cell adhesion. The sequence is that of Nck-associated protein 1 homolog (napA) from Dictyostelium discoideum (Social amoeba).